The primary structure comprises 141 residues: Nucleoside diphosphate kinase (141 aa).

Residues K11, F59, R87, T93, R104, and N114 each contribute to the ATP site. H117 acts as the Pros-phosphohistidine intermediate in catalysis.

Belongs to the NDK family. As to quaternary structure, homotetramer. The cofactor is Mg(2+).

It localises to the cytoplasm. The enzyme catalyses a 2'-deoxyribonucleoside 5'-diphosphate + ATP = a 2'-deoxyribonucleoside 5'-triphosphate + ADP. It catalyses the reaction a ribonucleoside 5'-diphosphate + ATP = a ribonucleoside 5'-triphosphate + ADP. Major role in the synthesis of nucleoside triphosphates other than ATP. The ATP gamma phosphate is transferred to the NDP beta phosphate via a ping-pong mechanism, using a phosphorylated active-site intermediate. The sequence is that of Nucleoside diphosphate kinase from Bdellovibrio bacteriovorus (strain ATCC 15356 / DSM 50701 / NCIMB 9529 / HD100).